A 485-amino-acid polypeptide reads, in one-letter code: Transcription factor ETV6 (485 aa).

Over residues 1-10 (MSETPAQSSI) the composition is skewed to polar residues. Residues 1–32 (MSETPAQSSIKQERISYTPPESPVASHRSSTP) are disordered. Residue K11 is modified to N6-acetyllysine; alternate. A Glycyl lysine isopeptide (Lys-Gly) (interchain with G-Cter in SUMO2); alternate cross-link involves residue K11. Residue T18 is modified to Phosphothreonine. The residue at position 22 (S22) is a Phosphoserine. The PNT domain maps to 41–125 (ALRMEEDSIH…ELLQHILKQR (85 aa)). Positions 157-210 (NCVQRTPRTPAESVHHNPPTIELLHRPRSPITTNHRPSPDPEQQRPQRSPLDNM) are disordered. T165 bears the Phosphothreonine mark. Phosphoserine occurs at positions 215, 240, and 251. K284 is covalently cross-linked (Glycyl lysine isopeptide (Lys-Gly) (interchain with G-Cter in SUMO2)). K298 is modified (N6-acetyllysine; alternate). K298 participates in a covalent cross-link: Glycyl lysine isopeptide (Lys-Gly) (interchain with G-Cter in SUMO2); alternate. At S319 the chain carries Phosphoserine. The ETS DNA-binding region spans 335 to 416 (RLLWDYVYQL…PGQRLLFRFM (82 aa)). Residues K399 and K417 each participate in a glycyl lysine isopeptide (Lys-Gly) (interchain with G-Cter in SUMO2) cross-link. Residues 440 to 485 (EQTYQEDEPTIASPVGWPRGNLPTGTAGGVMEAGELGVAVKEETRE) form a disordered region.

This sequence belongs to the ETS family. As to quaternary structure, can form homodimers or heterodimers with TEL2 or FLI1. Interacts with L3MBTL1 and HDAC9.

It localises to the nucleus. Functionally, transcriptional repressor; binds to the DNA sequence 5'-CCGGAAGT-3'. Plays a role in hematopoiesis and malignant transformation. This is Transcription factor ETV6 (Etv6) from Mus musculus (Mouse).